The sequence spans 708 residues: METLVGGLLTGEDSLISMSNDVSCLYVYDGPMRVFSQNALMPTLQSVKRSDQFSKGKTKRFIIDLFGMKRMWDIGNKQLEDENLDETVGVADLGLVKYLINNKYDEAEKTSLRKSMEEAFEKSMNEEFVVLNKGKSANDIISDTNAMCKFCVKNWIVATGFRGRTMSDLIEHHFRCMQGKQEVKGYIWKHKYNERLKRKQLSKEEVKFDREEYTSRSFRLLSFLKNSERTKLEPRAVFTAGVPWRAFIFVLEQTMLVVNKLDPNSVIWMGSDAKINTTNSRIKEIGMKNQGQTLVTLTGDNSKYNESMCPEVMMVFLRELGIKGPMLEVLDYALWQFSQKSVKPVAPIKKRTGKSTVVIKADSVKECRDAFNEKELELIQGVEWMDDGFVRVRRGMLMGMANNAFTTASTIASSFSFTPEAVYTLQSSDDFVTGSCGRDVQHARQRLEMALKVSKAAGLNVSQKKSFYVEGTTFEFNSMFVRDGKVMANGGNFENMTVPGGLGPSTDLFVVGKQARNSMLRGNLSFSQAMEMCKIGITNVEKVYYGNRKYQELKNEIREKCGEETMSIPESMGGDRKPRPWELPQSFDGIALKEAVNRGHWKAAKYIKSCCSIEFDEEGDQSWDTSKTALVVIRKNETDMRRRTVKTRNPKDKIFNDAMNKAKRMYETVVDRNPLLGLKGKGGRLTVKDLKARKLIDEVEVVKKKKHV.

A RdRp catalytic domain is found at 281–467 (RIKEIGMKNQ…GLNVSQKKSF (187 aa)).

In terms of assembly, the RNA polymerase is composed of three subunits: PB1, PB2 and PA.

It catalyses the reaction RNA(n) + a ribonucleoside 5'-triphosphate = RNA(n+1) + diphosphate. Its function is as follows. RNA-dependent RNA polymerase which is responsible for replication and transcription of virus segments. Binds the promoter sequence of the encapsidated viral RNA. Displays an endonuclease activity involved in cap-stealing. Cleaves cellular pre-mRNA to generate primers for viral transcription. In Infectious salmon anemia virus (isolate Atlantic salmon/Norway/810/9/99) (ISAV), this protein is RNA-directed RNA polymerase catalytic subunit.